A 99-amino-acid polypeptide reads, in one-letter code: High mobility group protein I (99 aa).

The tract at residues 1–99 (MSDSPVKKGR…ADTEEVNSSD (99 aa)) is disordered. At S4 the chain carries Phosphoserine; by CDC2 and MAPK. The segment at residues 7–19 (KKGRGRPAKAKPE) is a DNA-binding region (a.T hook 1). Residues 16-46 (AKPEETASPKAAKKEEKKVEEVPKKIEESTK) show a composition bias toward basic and acidic residues. S23 carries the post-translational modification Phosphoserine; by MAPK. Positions 54-66 (KKGRGRPSKGDKA) form a DNA-binding region, a.T hook 2. Residue S73 is modified to Phosphoserine; by PKC. Residues 74–86 (GKGRGRPAKNAKK) constitute a DNA-binding region (a.T hook 3). Acidic residues predominate over residues 90–99 (ADTEEVNSSD).

Belongs to the HMGA family. Post-translationally, phosphorylated in a cell-cycle dependent manner; substantially reduced in cells that have finished proliferating and are differentiated. Phosphorylation at Ser-4 and Ser-23 results in a 10-fold weakening of DNA-binding activity and altered the mode of protein-DNA interaction.

Its subcellular location is the nucleus. The protein localises to the nucleolus. It localises to the chromosome. Functionally, binds preferentially to the minor groove of A+T rich regions in double-stranded DNA via the second and third DBA-binding domains. It is suggested that these proteins could function in nucleosome phasing and in the 3'-end processing of mRNA transcripts. They are also involved in the transcription regulation of genes containing, or in close proximity to A+T-rich regions. The sequence is that of High mobility group protein I from Chironomus tentans (Midge).